A 516-amino-acid polypeptide reads, in one-letter code: Cytochrome P450 6d1 (516 aa).

Position 461 (Cys-461) interacts with heme.

The protein belongs to the cytochrome P450 family. Heme serves as cofactor.

It is found in the endoplasmic reticulum membrane. Its subcellular location is the microsome membrane. Functionally, metabolizes pyrethroid insecticides and other xenobiotics. The sequence is that of Cytochrome P450 6d1 (CYP6D1) from Musca domestica (House fly).